Here is a 457-residue protein sequence, read N- to C-terminus: ATP-dependent protease ATPase subunit HslU (457 aa).

ATP-binding positions include Val21, 63 to 68 (GVGKTE), Asp269, Glu335, and Arg407.

This sequence belongs to the ClpX chaperone family. HslU subfamily. In terms of assembly, a double ring-shaped homohexamer of HslV is capped on each side by a ring-shaped HslU homohexamer. The assembly of the HslU/HslV complex is dependent on binding of ATP.

Its subcellular location is the cytoplasm. ATPase subunit of a proteasome-like degradation complex; this subunit has chaperone activity. The binding of ATP and its subsequent hydrolysis by HslU are essential for unfolding of protein substrates subsequently hydrolyzed by HslV. HslU recognizes the N-terminal part of its protein substrates and unfolds these before they are guided to HslV for hydrolysis. This is ATP-dependent protease ATPase subunit HslU from Desulfotalea psychrophila (strain LSv54 / DSM 12343).